Here is a 291-residue protein sequence, read N- to C-terminus: Elongation factor Ts (291 aa).

The segment at 81-84 (TDFV) is involved in Mg(2+) ion dislocation from EF-Tu. Positions 271–291 (EGKEKKDESFADEVMAQVRDS) are disordered.

Belongs to the EF-Ts family.

The protein resides in the cytoplasm. In terms of biological role, associates with the EF-Tu.GDP complex and induces the exchange of GDP to GTP. It remains bound to the aminoacyl-tRNA.EF-Tu.GTP complex up to the GTP hydrolysis stage on the ribosome. In Halorhodospira halophila (strain DSM 244 / SL1) (Ectothiorhodospira halophila (strain DSM 244 / SL1)), this protein is Elongation factor Ts.